The following is a 330-amino-acid chain: 4-hydroxythreonine-4-phosphate dehydrogenase (330 aa).

Threonine 133 is a binding site for substrate. A divalent metal cation-binding residues include histidine 161, histidine 206, and histidine 261. Residues lysine 269, asparagine 278, and arginine 287 each contribute to the substrate site.

Belongs to the PdxA family. As to quaternary structure, homodimer. Zn(2+) serves as cofactor. Requires Mg(2+) as cofactor. It depends on Co(2+) as a cofactor.

The protein resides in the cytoplasm. The catalysed reaction is 4-(phosphooxy)-L-threonine + NAD(+) = 3-amino-2-oxopropyl phosphate + CO2 + NADH. It functions in the pathway cofactor biosynthesis; pyridoxine 5'-phosphate biosynthesis; pyridoxine 5'-phosphate from D-erythrose 4-phosphate: step 4/5. Its function is as follows. Catalyzes the NAD(P)-dependent oxidation of 4-(phosphooxy)-L-threonine (HTP) into 2-amino-3-oxo-4-(phosphooxy)butyric acid which spontaneously decarboxylates to form 3-amino-2-oxopropyl phosphate (AHAP). The sequence is that of 4-hydroxythreonine-4-phosphate dehydrogenase from Xylella fastidiosa (strain 9a5c).